The following is a 124-amino-acid chain: Large ribosomal subunit protein bL12 (124 aa).

It belongs to the bacterial ribosomal protein bL12 family. Homodimer. Part of the ribosomal stalk of the 50S ribosomal subunit. Forms a multimeric L10(L12)X complex, where L10 forms an elongated spine to which 2 to 4 L12 dimers bind in a sequential fashion. Binds GTP-bound translation factors.

In terms of biological role, forms part of the ribosomal stalk which helps the ribosome interact with GTP-bound translation factors. Is thus essential for accurate translation. This is Large ribosomal subunit protein bL12 from Borreliella burgdorferi (strain ZS7) (Borrelia burgdorferi).